The sequence spans 200 residues: Ephrin-A2 (200 aa).

The signal sequence occupies residues 1-22 (MPRWEAAALLAAIVGVCVWSDD). The region spanning 28–161 (SDRYAVYWNR…KLKVYVRPTN (134 aa)) is the Ephrin RBD domain. N-linked (GlcNAc...) asparagine glycosylation occurs at N36. 2 cysteine pairs are disulfide-bonded: C61–C101 and C89–C150. N-linked (GlcNAc...) asparagine glycans are attached at residues N161 and N175. N175 carries the GPI-anchor amidated asparagine lipid modification. The propeptide at 176-200 (NSCCSLAVPRAVLVAAPVFWTLLGS) is removed in mature form.

The protein belongs to the ephrin family. In terms of assembly, binds to the receptor tyrosine kinases EPHA3, EPHA4 and EPHA5. Interacts with EPHA8; activates EPHA8. Expressed in a gradient across the tectum being more strongly expressed at the posterior pole.

The protein localises to the cell membrane. Its function is as follows. Cell surface GPI-bound ligand for Eph receptors, a family of receptor tyrosine kinases which are crucial for migration, repulsion and adhesion during neuronal, vascular and epithelial development. Binds promiscuously Eph receptors residing on adjacent cells, leading to contact-dependent bidirectional signaling into neighboring cells. The signaling pathway downstream of the receptor is referred to as forward signaling while the signaling pathway downstream of the ephrin ligand is referred to as reverse signaling. With the EPHA2 receptor may play a role in bone remodeling through regulation of osteoclastogenesis and osteoblastogenesis. The protein is Ephrin-A2 (EFNA2) of Gallus gallus (Chicken).